The primary structure comprises 393 residues: 8-amino-7-oxononanoate synthase (393 aa).

A pyridoxal 5'-phosphate-binding site is contributed by 108–109 (GF). Residue histidine 133 participates in substrate binding. Residues serine 182, 207 to 210 (DDAH), and 238 to 241 (TLSK) contribute to the pyridoxal 5'-phosphate site. Position 241 is an N6-(pyridoxal phosphate)lysine (lysine 241). Substrate is bound at residue threonine 355.

It belongs to the class-II pyridoxal-phosphate-dependent aminotransferase family. BioF subfamily. Homodimer. Pyridoxal 5'-phosphate is required as a cofactor.

It carries out the reaction 6-carboxyhexanoyl-[ACP] + L-alanine + H(+) = (8S)-8-amino-7-oxononanoate + holo-[ACP] + CO2. It functions in the pathway cofactor biosynthesis; biotin biosynthesis. In terms of biological role, catalyzes the decarboxylative condensation of pimeloyl-[acyl-carrier protein] and L-alanine to produce 8-amino-7-oxononanoate (AON), [acyl-carrier protein], and carbon dioxide. This chain is 8-amino-7-oxononanoate synthase, found in Petrotoga mobilis (strain DSM 10674 / SJ95).